A 696-amino-acid chain; its full sequence is Elongation factor G (696 aa).

Positions 8 to 286 constitute a tr-type G domain; the sequence is EDVRNIGIAA…AVVHYLPSPV (279 aa). Residues 17–24, 81–85, and 135–138 contribute to the GTP site; these read AHIDAGKT, DTPGH, and NKMD.

This sequence belongs to the TRAFAC class translation factor GTPase superfamily. Classic translation factor GTPase family. EF-G/EF-2 subfamily.

Its subcellular location is the cytoplasm. In terms of biological role, catalyzes the GTP-dependent ribosomal translocation step during translation elongation. During this step, the ribosome changes from the pre-translocational (PRE) to the post-translocational (POST) state as the newly formed A-site-bound peptidyl-tRNA and P-site-bound deacylated tRNA move to the P and E sites, respectively. Catalyzes the coordinated movement of the two tRNA molecules, the mRNA and conformational changes in the ribosome. In Sulfurovum sp. (strain NBC37-1), this protein is Elongation factor G.